We begin with the raw amino-acid sequence, 208 residues long: V-type ATP synthase subunit D (208 aa).

It belongs to the V-ATPase D subunit family.

Its function is as follows. Produces ATP from ADP in the presence of a proton gradient across the membrane. This is V-type ATP synthase subunit D from Streptococcus pyogenes serotype M3 (strain ATCC BAA-595 / MGAS315).